Here is a 114-residue protein sequence, read N- to C-terminus: Large ribosomal subunit protein uL22 (114 aa).

Belongs to the universal ribosomal protein uL22 family. As to quaternary structure, part of the 50S ribosomal subunit.

This protein binds specifically to 23S rRNA; its binding is stimulated by other ribosomal proteins, e.g. L4, L17, and L20. It is important during the early stages of 50S assembly. It makes multiple contacts with different domains of the 23S rRNA in the assembled 50S subunit and ribosome. Functionally, the globular domain of the protein is located near the polypeptide exit tunnel on the outside of the subunit, while an extended beta-hairpin is found that lines the wall of the exit tunnel in the center of the 70S ribosome. This Myxococcus xanthus (strain DK1622) protein is Large ribosomal subunit protein uL22.